The following is a 426-amino-acid chain: Cuticle-degrading serine protease (426 aa).

The signal sequence occupies residues 1–21 (MLTNGLISLLAIAGLATNAFA). The propeptide occupies 22–123 (GPIRKVSNAG…VEQDTVVTTY (102 aa)). An Inhibitor I9 domain is found at 39–122 (KYIVVLKKGL…YVEQDTVVTT (84 aa)). In terms of domain architecture, Peptidase S8 spans 130 to 426 (TWGLDRISHE…TNHQVTIVAS (297 aa)). Asp-164 acts as the Charge relay system in catalysis. A glycan (N-linked (GlcNAc...) asparagine) is linked at Asn-178. Catalysis depends on His-200, which acts as the Charge relay system. Residue Asn-252 is glycosylated (N-linked (GlcNAc...) asparagine). The active-site Charge relay system is the Ser-353.

The protein belongs to the peptidase S8 family.

The protein resides in the secreted. Inhibited by PMSF, SSI, the peptide Phe-Val and by Phe, but not by EDTA. Functionally, hydrolyzes gelatin, casein, the chromogenic substrate azocoll and the cuticle of the nematode P.redivivus. Immobilizes P.redivivus. The chain is Cuticle-degrading serine protease from Orbilia oligospora (Nematode-trapping fungus).